We begin with the raw amino-acid sequence, 142 residues long: Extracellular globin-1 (142 aa).

Positions 1–142 (ECLVTEGLKV…DQIIDGIKDI (142 aa)) constitute a Globin domain. An intrachain disulfide couples C2 to C131. Position 94 (H94) interacts with heme b.

The protein belongs to the globin family. As to quaternary structure, the extracellular hemoglobin of the earthworm consists of 12 subunits that have a hexagonal bilayer structure with a molecular weight near 3.8 million. Each one-twelfth subunit is composed primarily of disulfide linked trimers (chains A, B, and C) and monomers (chain D).

The polypeptide is Extracellular globin-1 (Lumbricus terrestris (Common earthworm)).